Here is a 1171-residue protein sequence, read N- to C-terminus: DNA-directed RNA polymerase subunit beta (1171 aa).

The protein belongs to the RNA polymerase beta chain family. The RNAP catalytic core consists of 2 alpha, 1 beta, 1 beta' and 1 omega subunit. When a sigma factor is associated with the core the holoenzyme is formed, which can initiate transcription.

It carries out the reaction RNA(n) + a ribonucleoside 5'-triphosphate = RNA(n+1) + diphosphate. Functionally, DNA-dependent RNA polymerase catalyzes the transcription of DNA into RNA using the four ribonucleoside triphosphates as substrates. The polypeptide is DNA-directed RNA polymerase subunit beta (Arthrobacter sp. (strain FB24)).